Consider the following 109-residue polypeptide: Non-structural protein of 12.7 kDa (109 aa).

The protein belongs to the coronaviruses ns12.7 protein family.

The protein is Non-structural protein of 12.7 kDa of Sus scrofa (Pig).